Reading from the N-terminus, the 297-residue chain is MLVLSIRIKVWQTMESEITKRIVVPELEDILYKEHKVLDKGFVRLVDYMGSDESVVQAARISYGRGTKSVSQDAALINYLMRHSHTTPFEMCEIKFHIKLPIFVARQWVRHRTANVNEYSARYSVLDHEFYIPELDHVATQSEDNAQGRGNSLSNEDAQYVTDLLKRDSDMVYETYNKFLIKGVSREISRISLTLNYYTEWYWKIDLHNLLHFLRLRSDVHAQYEIRVYAETMLEIVKKWVPLTYAAFVEYCLESQSFSKSALSVVKKLIAGEDVAREDTGIGKREWRELMDVLADK.

Residues 41 to 251 (GFVRLVDYMG…PLTYAAFVEY (211 aa)) enclose the ThyX domain. FAD is bound by residues Thr-87, 110–112 (RHR), and Glu-118. DUMP is bound by residues 107–110 (QWVR), 118–122 (EYSAR), and Arg-190. Residues 110-120 (RHRTANVNEYS) carry the ThyX motif motif. Residues 206 to 208 (DLH) and His-212 contribute to the FAD site. Arg-217 is a dUMP binding site. Arg-217 serves as the catalytic Involved in ionization of N3 of dUMP, leading to its activation.

This sequence belongs to the thymidylate synthase ThyX family. In terms of assembly, homotetramer. The cofactor is FAD.

It carries out the reaction dUMP + (6R)-5,10-methylene-5,6,7,8-tetrahydrofolate + NADPH + H(+) = dTMP + (6S)-5,6,7,8-tetrahydrofolate + NADP(+). Its pathway is pyrimidine metabolism; dTTP biosynthesis. In terms of biological role, catalyzes the reductive methylation of 2'-deoxyuridine-5'-monophosphate (dUMP) to 2'-deoxythymidine-5'-monophosphate (dTMP) while utilizing 5,10-methylenetetrahydrofolate (mTHF) as the methyl donor, and NADPH and FADH(2) as the reductant. The sequence is that of Flavin-dependent thymidylate synthase from Ehrlichia ruminantium (strain Gardel).